A 158-amino-acid chain; its full sequence is 2-C-methyl-D-erythritol 2,4-cyclodiphosphate synthase (158 aa).

A divalent metal cation is bound by residues Asp8 and His10. 4-CDP-2-C-methyl-D-erythritol 2-phosphate-binding positions include 8–10 and 34–35; these read DVH and HS. Residue His42 participates in a divalent metal cation binding. Residues 56–58, 61–65, 132–135, and Phe139 contribute to the 4-CDP-2-C-methyl-D-erythritol 2-phosphate site; these read DIG, FPDDD, and TTFE.

It belongs to the IspF family. Homotrimer. The cofactor is a divalent metal cation.

The catalysed reaction is 4-CDP-2-C-methyl-D-erythritol 2-phosphate = 2-C-methyl-D-erythritol 2,4-cyclic diphosphate + CMP. It participates in isoprenoid biosynthesis; isopentenyl diphosphate biosynthesis via DXP pathway; isopentenyl diphosphate from 1-deoxy-D-xylulose 5-phosphate: step 4/6. Functionally, involved in the biosynthesis of isopentenyl diphosphate (IPP) and dimethylallyl diphosphate (DMAPP), two major building blocks of isoprenoid compounds. Catalyzes the conversion of 4-diphosphocytidyl-2-C-methyl-D-erythritol 2-phosphate (CDP-ME2P) to 2-C-methyl-D-erythritol 2,4-cyclodiphosphate (ME-CPP) with a corresponding release of cytidine 5-monophosphate (CMP). This Natranaerobius thermophilus (strain ATCC BAA-1301 / DSM 18059 / JW/NM-WN-LF) protein is 2-C-methyl-D-erythritol 2,4-cyclodiphosphate synthase.